Here is a 426-residue protein sequence, read N- to C-terminus: Antigen EM13 (426 aa).

The F-BAR domain maps to 1–240; it reads MIQERADIEK…TVAKVDADAD (240 aa). Disordered stretches follow at residues 287–315 and 350–369; these read LTSL…ISTS and ISKE…FVDD. The span at 305 to 315 shows a compositional bias: polar residues; it reads TTDSGSNISTS. One can recognise an SH3 domain in the interval 371 to 426; it reads RPGVPIRALYDYVGVEADELSFNSGDLFEKLEDEDEQGWCKGRKDGRVGLYPRQLR.

The sequence is that of Antigen EM13 (EM13) from Echinococcus multilocularis (Fox tapeworm).